Here is a 364-residue protein sequence, read N- to C-terminus: Histidinol-phosphate aminotransferase 1 (364 aa).

N6-(pyridoxal phosphate)lysine is present on K211.

It belongs to the class-II pyridoxal-phosphate-dependent aminotransferase family. Histidinol-phosphate aminotransferase subfamily. In terms of assembly, homodimer. Requires pyridoxal 5'-phosphate as cofactor.

It catalyses the reaction L-histidinol phosphate + 2-oxoglutarate = 3-(imidazol-4-yl)-2-oxopropyl phosphate + L-glutamate. Its pathway is amino-acid biosynthesis; L-histidine biosynthesis; L-histidine from 5-phospho-alpha-D-ribose 1-diphosphate: step 7/9. This Legionella pneumophila subsp. pneumophila (strain Philadelphia 1 / ATCC 33152 / DSM 7513) protein is Histidinol-phosphate aminotransferase 1.